Consider the following 434-residue polypeptide: Zinc finger and BTB domain-containing protein 8A (434 aa).

In terms of domain architecture, BTB spans 24 to 92 (CDCSILVEGK…VYSGKLSLTG (69 aa)). The segment at 134-238 (SLSDKDTGSN…SGNHVSQSEE (105 aa)) is disordered. A phosphoserine mark is found at serine 161 and serine 167. Residues lysine 172, lysine 176, and lysine 193 each participate in a glycyl lysine isopeptide (Lys-Gly) (interchain with G-Cter in SUMO2) cross-link. A compositionally biased stretch (basic and acidic residues) spans 192-202 (AKHEQRKEPSK). Residues 226 to 238 (QTDSGNHVSQSEE) show a composition bias toward polar residues. C2H2-type zinc fingers lie at residues 275 to 297 (FKCP…LRCH) and 303 to 326 (YPCQ…RTIH). Lysine 430 is covalently cross-linked (Glycyl lysine isopeptide (Lys-Gly) (interchain with G-Cter in SUMO2)).

Its subcellular location is the nucleus. Its function is as follows. May be involved in transcriptional regulation. In Mus musculus (Mouse), this protein is Zinc finger and BTB domain-containing protein 8A (Zbtb8a).